The chain runs to 331 residues: Tetraacyldisaccharide 4'-kinase (331 aa).

Residue 59-66 (FVGGTGKT) coordinates ATP.

This sequence belongs to the LpxK family.

It carries out the reaction a lipid A disaccharide + ATP = a lipid IVA + ADP + H(+). It participates in glycolipid biosynthesis; lipid IV(A) biosynthesis; lipid IV(A) from (3R)-3-hydroxytetradecanoyl-[acyl-carrier-protein] and UDP-N-acetyl-alpha-D-glucosamine: step 6/6. Transfers the gamma-phosphate of ATP to the 4'-position of a tetraacyldisaccharide 1-phosphate intermediate (termed DS-1-P) to form tetraacyldisaccharide 1,4'-bis-phosphate (lipid IVA). In Alkalilimnicola ehrlichii (strain ATCC BAA-1101 / DSM 17681 / MLHE-1), this protein is Tetraacyldisaccharide 4'-kinase.